Consider the following 805-residue polypeptide: RFX-like transcription factor daf-19 (805 aa).

The segment covering 1–14 (MTNEEPVPSTSSVL) has biased composition (polar residues). Residues 1 to 113 (MTNEEPVPST…TPRKKMEPED (113 aa)) are disordered. The segment covering 19-92 (KNVKIETPSR…DSKSLSKETH (74 aa)) has biased composition (basic and acidic residues). Residues 93 to 104 (NTISTRSSSSGT) are compositionally biased toward polar residues. The RFX-type winged-helix DNA-binding region spans 260–334 (TVNWLFENYE…YHYYGIRLKD (75 aa)).

This sequence belongs to the RFX family. As to expression, ciliated sensory neurons. In terms of tissue distribution, expressed in the male tail HOB and RnB neurons but not in male-specific CEM head neurons or other ciliated neurons.

The protein localises to the nucleus. In terms of biological role, probable transcription factor. May regulate some genes of ciliated sensory neurons. May activate the expression of the shared components of sensory cilia, but not the cell-type-specific expression. Together with transcription factor atf-7, involved in regulation of the serotonergic response of ADF neurons to pathogenic food. Its function is as follows. Involved in male mating behavior; may play a role in functional specialization of PKD ciliated sensory neurons. The polypeptide is RFX-like transcription factor daf-19 (Caenorhabditis elegans).